A 370-amino-acid chain; its full sequence is Quinolinate synthase (370 aa).

Iminosuccinate contacts are provided by His62 and Ser83. Cys128 lines the [4Fe-4S] cluster pocket. Residues Tyr154–Asn156 and Ser171 each bind iminosuccinate. Residue Cys215 coordinates [4Fe-4S] cluster. Residues His241–Glu243 and Thr258 contribute to the iminosuccinate site. Cys312 provides a ligand contact to [4Fe-4S] cluster.

Belongs to the quinolinate synthase family. Type 1 subfamily. [4Fe-4S] cluster is required as a cofactor.

Its subcellular location is the cytoplasm. It carries out the reaction iminosuccinate + dihydroxyacetone phosphate = quinolinate + phosphate + 2 H2O + H(+). It functions in the pathway cofactor biosynthesis; NAD(+) biosynthesis; quinolinate from iminoaspartate: step 1/1. Catalyzes the condensation of iminoaspartate with dihydroxyacetone phosphate to form quinolinate. This chain is Quinolinate synthase, found in Neisseria meningitidis serogroup C / serotype 2a (strain ATCC 700532 / DSM 15464 / FAM18).